The sequence spans 125 residues: Large ribosomal subunit protein bL12 (125 aa).

Belongs to the bacterial ribosomal protein bL12 family. Homodimer. Part of the ribosomal stalk of the 50S ribosomal subunit. Forms a multimeric L10(L12)X complex, where L10 forms an elongated spine to which 2 to 4 L12 dimers bind in a sequential fashion. Binds GTP-bound translation factors.

Functionally, forms part of the ribosomal stalk which helps the ribosome interact with GTP-bound translation factors. Is thus essential for accurate translation. The polypeptide is Large ribosomal subunit protein bL12 (Gluconacetobacter diazotrophicus (strain ATCC 49037 / DSM 5601 / CCUG 37298 / CIP 103539 / LMG 7603 / PAl5)).